The following is a 112-amino-acid chain: Putative pterin-4-alpha-carbinolamine dehydratase (112 aa).

It belongs to the pterin-4-alpha-carbinolamine dehydratase family.

It catalyses the reaction (4aS,6R)-4a-hydroxy-L-erythro-5,6,7,8-tetrahydrobiopterin = (6R)-L-erythro-6,7-dihydrobiopterin + H2O. In Shewanella baltica (strain OS223), this protein is Putative pterin-4-alpha-carbinolamine dehydratase.